Reading from the N-terminus, the 103-residue chain is MAKKSLIQREKKRQKLEQKYHLIRQSLKKKIRSKVSPLSLSEKTKMREKLQSLPRNSAPTRLHRRCFLTGRPRANYRHFGLSGHVLREMVYECLLPGATRSSW.

The segment at 34-56 (KVSPLSLSEKTKMREKLQSLPRN) is disordered.

It belongs to the universal ribosomal protein uS14 family. Part of the 30S ribosomal subunit.

It is found in the plastid. The protein resides in the chloroplast. In terms of biological role, binds 16S rRNA, required for the assembly of 30S particles. This Triticum aestivum (Wheat) protein is Small ribosomal subunit protein uS14c.